The sequence spans 157 residues: Serine-protein kinase RsbW (157 aa).

It belongs to the anti-sigma-factor family.

It catalyses the reaction L-seryl-[protein] + ATP = O-phospho-L-seryl-[protein] + ADP + H(+). The catalysed reaction is L-threonyl-[protein] + ATP = O-phospho-L-threonyl-[protein] + ADP + H(+). Its function is as follows. Negative regulator of sigma-B activity. Phosphorylates and inactivates its specific antagonist protein, RsbV. Upon phosphorylation of RsbV, RsbW is released and binds to sigma-B, thereby blocking its ability to form an RNA polymerase holoenzyme (E-sigma-B). This is Serine-protein kinase RsbW from Listeria innocua serovar 6a (strain ATCC BAA-680 / CLIP 11262).